The chain runs to 536 residues: Phosphoenolpyruvate carboxykinase (ATP) (536 aa).

The substrate site is built by Arg61, Tyr195, and Lys201. Residues Lys201, His220, and 236-244 contribute to the ATP site; that span reads GLSGTGKTT. 2 residues coordinate Mn(2+): Lys201 and His220. Asp257 serves as a coordination point for Mn(2+). Residues Glu285, Arg322, and Thr447 each contribute to the ATP site. A substrate-binding site is contributed by Arg322.

This sequence belongs to the phosphoenolpyruvate carboxykinase (ATP) family. It depends on Mn(2+) as a cofactor.

It localises to the cytoplasm. The enzyme catalyses oxaloacetate + ATP = phosphoenolpyruvate + ADP + CO2. It participates in carbohydrate biosynthesis; gluconeogenesis. In terms of biological role, involved in the gluconeogenesis. Catalyzes the conversion of oxaloacetate (OAA) to phosphoenolpyruvate (PEP) through direct phosphoryl transfer between the nucleoside triphosphate and OAA. The sequence is that of Phosphoenolpyruvate carboxykinase (ATP) from Rhizobium rhizogenes (strain K84 / ATCC BAA-868) (Agrobacterium radiobacter).